The primary structure comprises 504 residues: Maturase K (504 aa).

It belongs to the intron maturase 2 family. MatK subfamily.

The protein resides in the plastid. The protein localises to the chloroplast. In terms of biological role, usually encoded in the trnK tRNA gene intron. Probably assists in splicing its own and other chloroplast group II introns. The protein is Maturase K of Draba nemorosa (Woodland whitlowgrass).